A 189-amino-acid polypeptide reads, in one-letter code: Chitin synthase 1 (189 aa).

The protein belongs to the chitin synthase family. Class I subfamily.

It localises to the cell membrane. It catalyses the reaction [(1-&gt;4)-N-acetyl-beta-D-glucosaminyl](n) + UDP-N-acetyl-alpha-D-glucosamine = [(1-&gt;4)-N-acetyl-beta-D-glucosaminyl](n+1) + UDP + H(+). In terms of biological role, polymerizes chitin, a structural polymer of the cell wall and septum, by transferring the sugar moiety of UDP-GlcNAc to the non-reducing end of the growing chitin polymer. The polypeptide is Chitin synthase 1 (chs1) (Botryotinia fuckeliana (Noble rot fungus)).